The primary structure comprises 486 residues: Protein DETOXIFICATION 53 (486 aa).

The next 12 helical transmembrane spans lie at cysteine 15 to leucine 35, glycine 45 to serine 65, leucine 94 to leucine 114, methionine 130 to leucine 150, leucine 159 to valine 179, glycine 187 to threonine 207, alanine 240 to leucine 260, valine 267 to isoleucine 287, valine 312 to leucine 332, isoleucine 346 to proline 366, valine 386 to phenylalanine 406, and leucine 413 to isoleucine 433. Positions threonine 448–serine 474 are disordered. Basic and acidic residues predominate over residues aspartate 453–valine 466.

This sequence belongs to the multi antimicrobial extrusion (MATE) (TC 2.A.66.1) family.

It is found in the membrane. The chain is Protein DETOXIFICATION 53 from Arabidopsis thaliana (Mouse-ear cress).